The sequence spans 249 residues: ATP synthase subunit a, chloroplastic (249 aa).

5 helical membrane-spanning segments follow: residues 40–60, 97–117, 136–156, 201–221, and 222–242; these read QVLITSWVVIAILLGSAVIAI, VPFIGTLFLFIFVSNWSGALL, INTTVALALLTSVAYFYAGLS, LVVVVLVSLVPLVVPIPVMFL, and GLFTSGIQALIFATLAAAYIG.

It belongs to the ATPase A chain family. In terms of assembly, F-type ATPases have 2 components, CF(1) - the catalytic core - and CF(0) - the membrane proton channel. CF(1) has five subunits: alpha(3), beta(3), gamma(1), delta(1), epsilon(1). CF(0) has four main subunits: a, b, b' and c.

The protein localises to the plastid. It is found in the chloroplast thylakoid membrane. Functionally, key component of the proton channel; it plays a direct role in the translocation of protons across the membrane. This is ATP synthase subunit a, chloroplastic from Barbarea verna (Land cress).